A 1040-amino-acid polypeptide reads, in one-letter code: Chromatin modification-related protein rik1 (1040 aa).

It belongs to the DDB1 family. Component of the Clr4 methyltransferase complex (ClrC) composed of at least clr4, rik1, pcu4, rbx1, raf1 and raf2. The cullin pcu4, rik1, raf1, raf2 and the ring-box protein rbx1 are components of an E3 ubiquitin ligase, whose activity is essential for heterochromatin assembly.

The protein localises to the nucleus. The protein resides in the cytoplasm. It localises to the cytoskeleton. Its subcellular location is the microtubule organizing center. It is found in the spindle pole body. The protein localises to the chromosome. Component of the Clr4 methyltransferase complex (ClrC) which contributes to the establishment of heterochromatin by specifically methylating histone H3 to form H3K9me. ClrC preferentially ubiquitylates H3K14 and ClrC-mediated H3 ubiquitination promotes clr4 methyltransferase activity for the methylation of H3K9. H3K9me represents a specific tag for epigenetic transcriptional repression by recruiting swi6/HP1 to methylated histones which leads to transcriptional silencing within centromeric heterochromatin, telomeric regions and at the silent mating-type loci. Rik1 is involved in the RNAi-mediated targeting of ClrC to heterochromatic repeat elements. Rik1 also has a function in meiotic telomere clustering. The sequence is that of Chromatin modification-related protein rik1 (rik1) from Schizosaccharomyces pombe (strain 972 / ATCC 24843) (Fission yeast).